A 428-amino-acid chain; its full sequence is Enolase (428 aa).

Position 163 (glutamine 163) interacts with (2R)-2-phosphoglycerate. The active-site Proton donor is the glutamate 205. Residues aspartate 242, glutamate 284, and aspartate 311 each contribute to the Mg(2+) site. The (2R)-2-phosphoglycerate site is built by lysine 336, arginine 365, serine 366, and lysine 387. Lysine 336 functions as the Proton acceptor in the catalytic mechanism.

Belongs to the enolase family. Mg(2+) is required as a cofactor.

It localises to the cytoplasm. The protein localises to the secreted. It is found in the cell surface. The catalysed reaction is (2R)-2-phosphoglycerate = phosphoenolpyruvate + H2O. It functions in the pathway carbohydrate degradation; glycolysis; pyruvate from D-glyceraldehyde 3-phosphate: step 4/5. Catalyzes the reversible conversion of 2-phosphoglycerate (2-PG) into phosphoenolpyruvate (PEP). It is essential for the degradation of carbohydrates via glycolysis. The sequence is that of Enolase from Tropheryma whipplei (strain TW08/27) (Whipple's bacillus).